Here is a 143-residue protein sequence, read N- to C-terminus: FAD synthase (143 aa).

ATP is bound by residues 9-10, 14-17, and Asp-92; these read TF and HPGH.

This sequence belongs to the archaeal FAD synthase family. In terms of assembly, homodimer. A divalent metal cation is required as a cofactor.

The enzyme catalyses FMN + ATP + H(+) = FAD + diphosphate. It functions in the pathway cofactor biosynthesis; FAD biosynthesis; FAD from FMN: step 1/1. Functionally, catalyzes the transfer of the AMP portion of ATP to flavin mononucleotide (FMN) to produce flavin adenine dinucleotide (FAD) coenzyme. In Methanococcoides burtonii (strain DSM 6242 / NBRC 107633 / OCM 468 / ACE-M), this protein is FAD synthase.